The primary structure comprises 622 residues: MNTVLNNGRNTTCHAHNVVAHDPFSFEHKSLNTIEKEWKEWKRTDHSLYVAPIVGTVGSFLLKKVGSLVGKRILSELQNLIFPSGSIDLMQEILRATEQFINQRLNADTLGRVNAELAGLQANVAEFNRQVDNFLNPNQNPVPLAIIDSVNTLQQLFLSRLPQFQIQGYQLLLLPLFAQAANFNLSFIRGVILNADEWGISAATVRTYRDHLRKFHRDYSNYCINPYQTAFRGLNHRLPDMLEFRTYMFLNVFEYVSIWSLFKYQSLLVSSGANLYASGSGPTQSFTAQNWPFLYSLFQVNSNYVLNGLSGARTTITFPNIGGLPVYHNSTLHFARINYRGGVSSSRIGQANLNQNFNISTLFNPLQTPFIRSWLDSGTDREGVATSTNWQSGAFETTLLRFSIFSARGNSNFFPDYFIRNISGVVGTISNADLARPLHFNEIRDIGTTAVASLVTVHNRKNNIYDTHENGTMIHLAPNDYTGFTVSPIHATQVNNQIRTFISEKYGNQGDSLRFELSNPTARYTLRGNGNSYNLYLRVSSIGSSTIRVTINGRVYTANVNTTTNNDGVLDNGARFSDINIGNVVASANTNVPLDIQVTFNGNPQFELMNIMFVPTNLPPLY.

It belongs to the delta endotoxin family.

In terms of biological role, promotes colloidosmotic lysis by binding to the midgut epithelial cells of lepidopteran larvae. Has low activity on dipteran larvae. The chain is Pesticidal crystal protein Cry2Ac (cry2Ac) from Bacillus thuringiensis.